The following is a 134-amino-acid chain: Phosphoribosyl-ATP pyrophosphatase (134 aa).

Belongs to the PRA-PH family.

It is found in the cytoplasm. The catalysed reaction is 1-(5-phospho-beta-D-ribosyl)-ATP + H2O = 1-(5-phospho-beta-D-ribosyl)-5'-AMP + diphosphate + H(+). The protein operates within amino-acid biosynthesis; L-histidine biosynthesis; L-histidine from 5-phospho-alpha-D-ribose 1-diphosphate: step 2/9. The protein is Phosphoribosyl-ATP pyrophosphatase of Verminephrobacter eiseniae (strain EF01-2).